A 351-amino-acid chain; its full sequence is Phospho-N-acetylmuramoyl-pentapeptide-transferase (351 aa).

Transmembrane regions (helical) follow at residues 17-37, 63-83, 85-105, 135-155, 158-178, 190-210, 230-250, 254-274, 279-299, and 328-348; these read TAYA…FIIL, IPTM…FFWI, LWNV…CLGF, ISVT…YFPF, SLKL…LISA, GLAI…AYLT, LVIF…FNAY, IMMG…TALI, ILFA…IIQV, and QVVI…LSTL.

It belongs to the glycosyltransferase 4 family. MraY subfamily. It depends on Mg(2+) as a cofactor.

The protein localises to the cell inner membrane. It catalyses the reaction UDP-N-acetyl-alpha-D-muramoyl-L-alanyl-gamma-D-glutamyl-meso-2,6-diaminopimeloyl-D-alanyl-D-alanine + di-trans,octa-cis-undecaprenyl phosphate = di-trans,octa-cis-undecaprenyl diphospho-N-acetyl-alpha-D-muramoyl-L-alanyl-D-glutamyl-meso-2,6-diaminopimeloyl-D-alanyl-D-alanine + UMP. The protein operates within cell wall biogenesis; peptidoglycan biosynthesis. Its function is as follows. Catalyzes the initial step of the lipid cycle reactions in the biosynthesis of the cell wall peptidoglycan: transfers peptidoglycan precursor phospho-MurNAc-pentapeptide from UDP-MurNAc-pentapeptide onto the lipid carrier undecaprenyl phosphate, yielding undecaprenyl-pyrophosphoryl-MurNAc-pentapeptide, known as lipid I. The protein is Phospho-N-acetylmuramoyl-pentapeptide-transferase of Borrelia hermsii (strain HS1 / DAH).